The following is a 351-amino-acid chain: D-alanine--D-alanine ligase (351 aa).

One can recognise an ATP-grasp domain in the interval 141–349; the sequence is KAAFSAAGLP…ISQLVARLIE (209 aa). Position 176-231 (176-231) interacts with ATP; that stretch reads ETQLGYPCFIKPANLGSSVGISKAYDKKELLNGLDLAAQLDSRIVVEKNIKARELE. 3 residues coordinate Mg(2+): Asp-302, Glu-316, and Asn-318.

It belongs to the D-alanine--D-alanine ligase family. It depends on Mg(2+) as a cofactor. Requires Mn(2+) as cofactor.

Its subcellular location is the cytoplasm. The catalysed reaction is 2 D-alanine + ATP = D-alanyl-D-alanine + ADP + phosphate + H(+). The protein operates within cell wall biogenesis; peptidoglycan biosynthesis. Its function is as follows. Cell wall formation. This chain is D-alanine--D-alanine ligase, found in Prochlorococcus marinus (strain SARG / CCMP1375 / SS120).